The primary structure comprises 353 residues: Histidinol-phosphate aminotransferase (353 aa).

An N6-(pyridoxal phosphate)lysine modification is found at lysine 214.

Belongs to the class-II pyridoxal-phosphate-dependent aminotransferase family. Histidinol-phosphate aminotransferase subfamily. In terms of assembly, homodimer. Requires pyridoxal 5'-phosphate as cofactor.

The catalysed reaction is L-histidinol phosphate + 2-oxoglutarate = 3-(imidazol-4-yl)-2-oxopropyl phosphate + L-glutamate. Its pathway is amino-acid biosynthesis; L-histidine biosynthesis; L-histidine from 5-phospho-alpha-D-ribose 1-diphosphate: step 7/9. The sequence is that of Histidinol-phosphate aminotransferase from Gloeobacter violaceus (strain ATCC 29082 / PCC 7421).